A 792-amino-acid polypeptide reads, in one-letter code: Kinesin-like protein KIF3C (792 aa).

Positions 10–363 (ALKVVARCRP…LRFANRAKNI (354 aa)) constitute a Kinesin motor domain. 97–104 (GQTGTGKT) contributes to the ATP binding site. Disordered stretches follow at residues 249–287 (GSER…RPKE), 397–418 (MLGK…APAG), and 749–792 (RPST…LDHE). Positions 257 to 268 (GPNTTGGTATQP) are enriched in low complexity. The segment covering 269–282 (TGGGGGGGGGGGGG) has biased composition (gly residues). Positions 374–627 (KDTLLREFQE…QNEQTRELKL (254 aa)) form a coiled coil. Over residues 397–412 (MLGKRLRRKSSRRKKA) the composition is skewed to basic residues. A globular region spans residues 628 to 792 (KYLIIENFIP…LRPTTVLDHE (165 aa)). The segment covering 773–792 (AHASLAASAALRPTTVLDHE) has biased composition (low complexity).

This sequence belongs to the TRAFAC class myosin-kinesin ATPase superfamily. Kinesin family. Kinesin II subfamily. As to quaternary structure, heterodimer of KIF3A and KIF3C.

It localises to the cytoplasm. It is found in the cytoskeleton. Its function is as follows. Microtubule-based anterograde translocator for membranous organelles. The chain is Kinesin-like protein KIF3C (KIF3C) from Bos taurus (Bovine).